An 89-amino-acid polypeptide reads, in one-letter code: Small ribosomal subunit protein bS20 (89 aa).

The tract at residues 1-21 (MANSAQAKKRARQNVKARKHN) is disordered. A compositionally biased stretch (basic residues) spans 7–21 (AKKRARQNVKARKHN).

The protein belongs to the bacterial ribosomal protein bS20 family.

Functionally, binds directly to 16S ribosomal RNA. The sequence is that of Small ribosomal subunit protein bS20 from Acinetobacter baylyi (strain ATCC 33305 / BD413 / ADP1).